A 469-amino-acid chain; its full sequence is Ribulose bisphosphate carboxylase large chain (469 aa).

N6,N6,N6-trimethyllysine is present on Lys8. Substrate is bound by residues Asn117 and Thr167. Residue Lys169 is the Proton acceptor of the active site. Lys171 provides a ligand contact to substrate. Lys195, Asp197, and Glu198 together coordinate Mg(2+). Lys195 carries the N6-carboxylysine modification. The Proton acceptor role is filled by His288. Arg289, His321, and Ser373 together coordinate substrate.

It belongs to the RuBisCO large chain family. Type I subfamily. Heterohexadecamer of 8 large chains and 8 small chains; disulfide-linked. The disulfide link is formed within the large subunit homodimers. Mg(2+) is required as a cofactor. In terms of processing, the disulfide bond which can form in the large chain dimeric partners within the hexadecamer appears to be associated with oxidative stress and protein turnover.

The protein resides in the plastid. It localises to the chloroplast. The catalysed reaction is 2 (2R)-3-phosphoglycerate + 2 H(+) = D-ribulose 1,5-bisphosphate + CO2 + H2O. It catalyses the reaction D-ribulose 1,5-bisphosphate + O2 = 2-phosphoglycolate + (2R)-3-phosphoglycerate + 2 H(+). Functionally, ruBisCO catalyzes two reactions: the carboxylation of D-ribulose 1,5-bisphosphate, the primary event in carbon dioxide fixation, as well as the oxidative fragmentation of the pentose substrate in the photorespiration process. Both reactions occur simultaneously and in competition at the same active site. This chain is Ribulose bisphosphate carboxylase large chain, found in Persicaria senticosa (Knotweed).